The primary structure comprises 342 residues: S-adenosylmethionine:tRNA ribosyltransferase-isomerase (342 aa).

The protein belongs to the QueA family. In terms of assembly, monomer.

The protein resides in the cytoplasm. The catalysed reaction is 7-aminomethyl-7-carbaguanosine(34) in tRNA + S-adenosyl-L-methionine = epoxyqueuosine(34) in tRNA + adenine + L-methionine + 2 H(+). Its pathway is tRNA modification; tRNA-queuosine biosynthesis. In terms of biological role, transfers and isomerizes the ribose moiety from AdoMet to the 7-aminomethyl group of 7-deazaguanine (preQ1-tRNA) to give epoxyqueuosine (oQ-tRNA). This chain is S-adenosylmethionine:tRNA ribosyltransferase-isomerase, found in Streptococcus pneumoniae serotype 4 (strain ATCC BAA-334 / TIGR4).